The primary structure comprises 487 residues: N-succinylglutamate 5-semialdehyde dehydrogenase (487 aa).

Residues 1–23 (MTHFIKGQWQAGKGHDVTSSNPA) form a disordered region. 220–225 (GSSRTG) provides a ligand contact to NAD(+). Active-site residues include glutamate 243 and cysteine 277.

This sequence belongs to the aldehyde dehydrogenase family. AstD subfamily.

It carries out the reaction N-succinyl-L-glutamate 5-semialdehyde + NAD(+) + H2O = N-succinyl-L-glutamate + NADH + 2 H(+). The protein operates within amino-acid degradation; L-arginine degradation via AST pathway; L-glutamate and succinate from L-arginine: step 4/5. Its function is as follows. Catalyzes the NAD-dependent reduction of succinylglutamate semialdehyde into succinylglutamate. The protein is N-succinylglutamate 5-semialdehyde dehydrogenase of Shewanella sp. (strain ANA-3).